The chain runs to 173 residues: Crossover junction endodeoxyribonuclease RuvC (173 aa).

Catalysis depends on residues D8, E67, and D139. Mg(2+)-binding residues include D8, E67, and D139.

The protein belongs to the RuvC family. In terms of assembly, homodimer which binds Holliday junction (HJ) DNA. The HJ becomes 2-fold symmetrical on binding to RuvC with unstacked arms; it has a different conformation from HJ DNA in complex with RuvA. In the full resolvosome a probable DNA-RuvA(4)-RuvB(12)-RuvC(2) complex forms which resolves the HJ. The cofactor is Mg(2+).

It localises to the cytoplasm. It catalyses the reaction Endonucleolytic cleavage at a junction such as a reciprocal single-stranded crossover between two homologous DNA duplexes (Holliday junction).. In terms of biological role, the RuvA-RuvB-RuvC complex processes Holliday junction (HJ) DNA during genetic recombination and DNA repair. Endonuclease that resolves HJ intermediates. Cleaves cruciform DNA by making single-stranded nicks across the HJ at symmetrical positions within the homologous arms, yielding a 5'-phosphate and a 3'-hydroxyl group; requires a central core of homology in the junction. The consensus cleavage sequence is 5'-(A/T)TT(C/G)-3'. Cleavage occurs on the 3'-side of the TT dinucleotide at the point of strand exchange. HJ branch migration catalyzed by RuvA-RuvB allows RuvC to scan DNA until it finds its consensus sequence, where it cleaves and resolves the cruciform DNA. This chain is Crossover junction endodeoxyribonuclease RuvC, found in Tolumonas auensis (strain DSM 9187 / NBRC 110442 / TA 4).